The sequence spans 184 residues: Large ribosomal subunit protein uL6 (184 aa).

This sequence belongs to the universal ribosomal protein uL6 family. In terms of assembly, part of the 50S ribosomal subunit.

Functionally, this protein binds to the 23S rRNA, and is important in its secondary structure. It is located near the subunit interface in the base of the L7/L12 stalk, and near the tRNA binding site of the peptidyltransferase center. This Thermotoga petrophila (strain ATCC BAA-488 / DSM 13995 / JCM 10881 / RKU-1) protein is Large ribosomal subunit protein uL6.